Here is a 326-residue protein sequence, read N- to C-terminus: Fructose operon regulatory protein (326 aa).

Residues 1-58 (MTLDEIAKLAGVSKTTASYVINGKAQKYRISEKTQHKVMAVVEQYNFRPDHAASALRA) form the HTH lacI-type domain. The H-T-H motif DNA-binding region spans 3–22 (LDEIAKLAGVSKTTASYVIN).

In terms of assembly, homodimer.

Its activity is regulated as follows. Interaction with F1P may induce a structural change in the DNA spacer region between the -35 and -10 elements, thereby facilitating RNAP binding to the promoter to trigger the transcriptional activation of the fru operon. Interaction with F1P does not release FruR from its binding sequence. Functionally, regulates the expression of the fruBKA (fru) operon, which encodes proteins involved in the import and metabolism of fructose. In the absence of fructose 1-phosphate (F1P), binds to the promoter region of fruB, interferes with the binding of the RNA polymerase (RNAP) to the promoter and represses the expression of the operon. In the presence of F1P, activates the transcription of the fru operon by facilitating the binding of RNAP to the promoter. Essential for the expression of the fru operon and thus for growth on fructose. The protein is Fructose operon regulatory protein of Vibrio cholerae serotype O1 (strain ATCC 39315 / El Tor Inaba N16961).